A 410-amino-acid chain; its full sequence is MKVYLVGGAVRDRLLGIPVQEQDWVVVGATPEELLKRKYRQVGRDFPVFLHPETKEEYALARTERKSAPGYYGFICDFSESVTLEEDLARRDLTINAMAMDEQGNLIDPYQGQRDLEEKLLRHVSPAFAEDPVRVLRVARFASRFHHLGFKIANETRLLMYSMVKQGELAHLIPERVWQEWQKSLQEKNPEQFILSLRSCDALRVVLPEINSLFGVPNPHQYHQEIDTGIHSLMALRASSELSEEPLVRFAALVHDLGKASTPIQDWPKHHGHEEEGTKLIRALCARLRIPNDYRDLAVTVARAHLNIHRVCELRPNTIVKLLEQVDAFRRPQLFHKILIACQADAESCGKTVVYRQTQLWNEILSECVKVTPQTFIVQGYEGKAIKEAMHQSRVACVERIMTSWKSNEK.

ATP-binding residues include glycine 8 and arginine 11. Positions 8 and 11 each coordinate CTP. Glutamate 21 and aspartate 23 together coordinate Mg(2+). ATP contacts are provided by arginine 91, arginine 137, and arginine 140. 3 residues coordinate CTP: arginine 91, arginine 137, and arginine 140. Positions 228-329 (TGIHSLMALR…VKLLEQVDAF (102 aa)) constitute an HD domain.

This sequence belongs to the tRNA nucleotidyltransferase/poly(A) polymerase family. Bacterial CCA-adding enzyme type 1 subfamily. Monomer. Can also form homodimers and oligomers. Requires Mg(2+) as cofactor. Ni(2+) is required as a cofactor.

The enzyme catalyses a tRNA precursor + 2 CTP + ATP = a tRNA with a 3' CCA end + 3 diphosphate. It catalyses the reaction a tRNA with a 3' CCA end + 2 CTP + ATP = a tRNA with a 3' CCACCA end + 3 diphosphate. Functionally, catalyzes the addition and repair of the essential 3'-terminal CCA sequence in tRNAs without using a nucleic acid template. Adds these three nucleotides in the order of C, C, and A to the tRNA nucleotide-73, using CTP and ATP as substrates and producing inorganic pyrophosphate. tRNA 3'-terminal CCA addition is required both for tRNA processing and repair. Also involved in tRNA surveillance by mediating tandem CCA addition to generate a CCACCA at the 3' terminus of unstable tRNAs. While stable tRNAs receive only 3'-terminal CCA, unstable tRNAs are marked with CCACCA and rapidly degraded. In Legionella pneumophila (strain Paris), this protein is Multifunctional CCA protein.